The chain runs to 383 residues: Chitinase-3-like protein 1 (383 aa).

A signal peptide spans 1–21 (MGLRVAQTGFVVLVLLQSCAA). Residues 22–383 (YKLICYYTSW…NAIKDVLAGV (362 aa)) enclose the GH18 domain. A disulfide bridge connects residues C26 and C51. N60 is a glycosylation site (N-linked (GlcNAc...) asparagine). Chitin is bound by residues 70-71 (EW), 97-100 (GGWN), Y141, 204-207 (LTYD), and K263. A disulfide bridge connects residues C300 and C364. The important for AKT1 activation and IL8 production stretch occupies residues 324 to 338 (QWVAYDDQESVKNKA). W352 lines the chitin pocket.

The protein belongs to the glycosyl hydrolase 18 family. In terms of assembly, monomer. Detected in mammary gland.

It is found in the secreted. Its subcellular location is the extracellular space. It localises to the cytoplasm. The protein resides in the perinuclear region. The protein localises to the endoplasmic reticulum. Carbohydrate-binding lectin with a preference for chitin. Has no chitinase activity. May play a role in tissue remodeling and in the capacity of cells to respond to and cope with changes in their environment. Plays a role in T-helper cell type 2 (Th2) inflammatory response and IL-13-induced inflammation, regulating allergen sensitization, inflammatory cell apoptosis, dendritic cell accumulation and M2 macrophage differentiation. Facilitates invasion of pathogenic enteric bacteria into colonic mucosa and lymphoid organs. Mediates activation of AKT1 signaling pathway and subsequent IL8 production in colonic epithelial cells. Regulates antibacterial responses in lung by contributing to macrophage bacterial killing, controlling bacterial dissemination and augmenting host tolerance. Also regulates hyperoxia-induced injury, inflammation and epithelial apoptosis in lung. This chain is Chitinase-3-like protein 1 (CHI3L1), found in Bubalus bubalis (Domestic water buffalo).